The following is a 310-amino-acid chain: MDSFKTVLKFFTDQKTTIGYSVMAILTIGSERIFSMVSFQCPCTKGQNFPYGICFLLGPAVVLLVVGFFVSTRFWRLYTGCCLNPLKLCPRGNFVGCLKGLIKVLYGACVAPVMWLTVALLNGTFYECAVSGLDEVAVIQIFCADKGSVCQDELHRVPCGKSTLPPEQNTELLYMLRAQSQILGWSVIITAVVIALIGTCYKNCVSQVSYLQLTFWKIYMEKEREKFDAFANDYATKLADRNLKSFFDNKLPEEFPFPNHKAWEEISAIYNFRKSEQHYSTLQRYVERSDRDYSPDEHPMVEMDHGIEMV.

4 helical membrane passes run 17–37, 49–69, 101–121, and 181–201; these read TIGY…FSMV, FPYG…VGFF, LIKV…VALL, and QILG…GTCY.

The protein belongs to the CALHM family.

Its subcellular location is the membrane. Its function is as follows. Pore-forming subunit of a voltage-gated ion channel. This chain is Calcium homeostasis modulator protein 5 (calhm5.1), found in Danio rerio (Zebrafish).